A 641-amino-acid polypeptide reads, in one-letter code: Pre-mRNA-processing factor 39 (641 aa).

The tract at residues 1-50 is disordered; that stretch reads MEKSPEHCAEGSPSPATESAPSATEPPLPSTEPPLPSTEPPLPSTEPPLP. Positions 10–23 are enriched in low complexity; it reads EGSPSPATESAPSA. Positions 24 to 50 are enriched in pro residues; sequence TEPPLPSTEPPLPSTEPPLPSTEPPLP. 7 HAT repeats span residues 50–82, 84–116, 118–150, 158–193, 304–336, 338–370, and 372–407; these read PPLPPDFEKYWKSVQAYPEDFNTWTYLLQYVEQ, NHLFAARKAFDAFLAHYPYCYGYWKKYADLEKK, NNILEADEVYRRGIQAITLSVDLWMHYLNFLKE, ETSLTLRGTFEHAVVSAGLDFRSDKLWEMYINWETE, NFEEEIKRPYFHVKPLEKAQLNNWKEYLEFELE, GSNERIVILFERCVIACACYEEFWIKYAKYMEN, and SVEGVRHVYNRACHVHLAKKPMVHLLWAAFEEQQGN.

It belongs to the PRP39 family.

It localises to the nucleus. Involved in pre-mRNA splicing. This Xenopus laevis (African clawed frog) protein is Pre-mRNA-processing factor 39 (prpf39).